The chain runs to 169 residues: S-ribosylhomocysteine lyase (169 aa).

Residues histidine 54, histidine 58, and cysteine 128 each contribute to the Fe cation site.

Belongs to the LuxS family. Homodimer. Requires Fe cation as cofactor.

The enzyme catalyses S-(5-deoxy-D-ribos-5-yl)-L-homocysteine = (S)-4,5-dihydroxypentane-2,3-dione + L-homocysteine. Involved in the synthesis of autoinducer 2 (AI-2) which is secreted by bacteria and is used to communicate both the cell density and the metabolic potential of the environment. The regulation of gene expression in response to changes in cell density is called quorum sensing. Catalyzes the transformation of S-ribosylhomocysteine (RHC) to homocysteine (HC) and 4,5-dihydroxy-2,3-pentadione (DPD). This is S-ribosylhomocysteine lyase from Shewanella sp. (strain MR-7).